Reading from the N-terminus, the 55-residue chain is Large ribosomal subunit protein bL33 (55 aa).

It belongs to the bacterial ribosomal protein bL33 family.

The chain is Large ribosomal subunit protein bL33 from Clavibacter sepedonicus (Clavibacter michiganensis subsp. sepedonicus).